A 248-amino-acid polypeptide reads, in one-letter code: Coproheme decarboxylase (248 aa).

Fe-coproporphyrin III-binding positions include Arg130, Tyr144, Tyr144–Lys148, Lys148, His171, Gln184, and Ser222. Tyr144 is an active-site residue.

This sequence belongs to the ChdC family. Type 1 subfamily. In terms of assembly, homopentamer. Fe-coproporphyrin III is required as a cofactor.

It carries out the reaction Fe-coproporphyrin III + 2 H2O2 + 2 H(+) = heme b + 2 CO2 + 4 H2O. The catalysed reaction is Fe-coproporphyrin III + H2O2 + H(+) = harderoheme III + CO2 + 2 H2O. The enzyme catalyses harderoheme III + H2O2 + H(+) = heme b + CO2 + 2 H2O. Its pathway is porphyrin-containing compound metabolism; protoheme biosynthesis. In terms of biological role, involved in coproporphyrin-dependent heme b biosynthesis. Catalyzes the decarboxylation of Fe-coproporphyrin III (coproheme) to heme b (protoheme IX), the last step of the pathway. The reaction occurs in a stepwise manner with a three-propionate harderoheme intermediate. The sequence is that of Coproheme decarboxylase from Geobacillus stearothermophilus (strain DSM 13240 / CIP 106956 / 10).